The following is a 188-amino-acid chain: Pro-adrenomedullin (188 aa).

An N-terminal signal peptide occupies residues 1-21; that stretch reads MKLVPVALLYLGSLAFLGADT. Residue arginine 41 is modified to Arginine amide. Residues 45–92 constitute a propeptide that is removed on maturation; it reads ELRVSSSYPTGLAEVKAGPAQTLIRTQDVKGASRNPQTSGPDAARIRV. A disulfide bridge connects residues cysteine 110 and cysteine 115. Residues 131–176 are disordered; that stretch reads DKDGVAPRSKISPQGYGRRRRRSLPEPGLRRTLLFPEPRPGGAPAP. Tyrosine 146 bears the Tyrosine amide mark. The propeptide at 153 to 188 is preproAM C-terminal fragment; sequence SLPEPGLRRTLLFPEPRPGGAPAPRAHQVLANLLKM.

This sequence belongs to the adrenomedullin family.

The protein resides in the secreted. In terms of biological role, adrenomedullin/ADM and proadrenomedullin N-20 terminal peptide/PAMP are peptide hormones that act as potent hypotensive and vasodilatator agents. Numerous actions have been reported most related to the physiologic control of fluid and electrolyte homeostasis. ADM function is mediated by the CALCRL-RAMP2 and CALCRL-RAMP3 receptor complexes with ADM showing the highest potency for the CALCRL-RAMP2 complex. The sequence is that of Pro-adrenomedullin (ADM) from Canis lupus familiaris (Dog).